The following is a 147-amino-acid chain: MTLPSLTKLLLKAKKEKNLSFEDLGNLINRDEVWVASLFYGQATASEEEATSLIAALDLTSDLKEDLSTPPVKGCLDPVIPTDPLIYRFYEIMQVYGLPMKDVIQEKFGDGIMSAIDFSIEVDKVEDPKGDRVLVKMCGKFLPYKKW.

Catalysis depends on residues Arg-88, Glu-91, and Ser-114.

It belongs to the cyanase family.

The catalysed reaction is cyanate + hydrogencarbonate + 3 H(+) = NH4(+) + 2 CO2. Functionally, catalyzes the reaction of cyanate with bicarbonate to produce ammonia and carbon dioxide. In Prochlorococcus marinus subsp. pastoris (strain CCMP1986 / NIES-2087 / MED4), this protein is Cyanate hydratase.